The sequence spans 445 residues: Ubiquitin carboxyl-terminal hydrolase MINDY-3 (445 aa).

Catalysis depends on C51, which acts as the Nucleophile. At S125 the chain carries Phosphoserine. Catalysis depends on H287, which acts as the Proton acceptor.

This sequence belongs to the MINDY deubiquitinase family. FAM188 subfamily. Interacts with COPS5.

It localises to the nucleus. The catalysed reaction is Thiol-dependent hydrolysis of ester, thioester, amide, peptide and isopeptide bonds formed by the C-terminal Gly of ubiquitin (a 76-residue protein attached to proteins as an intracellular targeting signal).. In terms of biological role, hydrolase that can remove 'Lys-48'-linked conjugated ubiquitin from proteins. The sequence is that of Ubiquitin carboxyl-terminal hydrolase MINDY-3 (MINDY3) from Bos taurus (Bovine).